The primary structure comprises 390 residues: 3-ketoacyl-CoA thiolase (390 aa).

Catalysis depends on Cys95, which acts as the Acyl-thioester intermediate. Catalysis depends on proton acceptor residues His346 and Cys376.

This sequence belongs to the thiolase-like superfamily. Thiolase family. Heterotetramer of two alpha chains (FadB) and two beta chains (FadA).

It localises to the cytoplasm. It catalyses the reaction an acyl-CoA + acetyl-CoA = a 3-oxoacyl-CoA + CoA. It functions in the pathway lipid metabolism; fatty acid beta-oxidation. Its function is as follows. Catalyzes the final step of fatty acid oxidation in which acetyl-CoA is released and the CoA ester of a fatty acid two carbons shorter is formed. The protein is 3-ketoacyl-CoA thiolase of Acinetobacter baylyi (strain ATCC 33305 / BD413 / ADP1).